Reading from the N-terminus, the 941-residue chain is Coiled-coil domain-containing protein 39 (941 aa).

Coiled coils occupy residues 16–122, 164–273, 306–605, and 665–825; these read AIPV…ENGI, AQQD…ESEI, QLKG…EIKV, and IKAA…EEQD. Positions 868–941 are disordered; it reads PTASTKGSRQ…SNVKSKKSSK (74 aa). 2 stretches are compositionally biased toward low complexity: residues 871–903 and 914–934; these read STKG…SQSS and SSSL…SSNV. 2 positions are modified to phosphoserine: S892 and S900.

This sequence belongs to the CCDC39 family. In terms of tissue distribution, mainly expressed in nasal brushings and, to a lesser extent, in lungs and testis.

It is found in the cytoplasm. The protein resides in the cytoskeleton. It localises to the cilium axoneme. Functionally, required for assembly of dynein regulatory complex (DRC) and inner dynein arm (IDA) complexes, which are responsible for ciliary beat regulation, thereby playing a central role in motility in cilia and flagella. Probably acts together with CCDC40 to form a molecular ruler that determines the 96 nanometer (nm) repeat length and arrangements of components in cilia and flagella. Not required for outer dynein arm complexes assembly. This Homo sapiens (Human) protein is Coiled-coil domain-containing protein 39.